The sequence spans 52 residues: Conotoxin Cal6.36 (52 aa).

The N-terminal stretch at 1 to 22 (MKVTCVLTLAVLILTVGQMVTA) is a signal peptide. 3 cysteine pairs are disulfide-bonded: cysteine 24-cysteine 39, cysteine 31-cysteine 43, and cysteine 38-cysteine 47.

In terms of tissue distribution, expressed by the venom duct.

It is found in the secreted. Functionally, probable neurotoxin. This is Conotoxin Cal6.36 from Californiconus californicus (California cone).